The following is a 2527-amino-acid chain: Highly reducing polyketide synthase poxF (2527 aa).

The region spanning 20 to 445 (VMPIAIIGMA…GANAHVIVES (426 aa)) is the Ketosynthase family 3 (KS3) domain. Residues cysteine 193, histidine 328, and histidine 368 each act as for beta-ketoacyl synthase activity in the active site. A malonyl-CoA:ACP transacylase (MAT) domain region spans residues 560 to 882 (VFTGQGAQWF…TYASCLSRGQ (323 aa)). The interval 951–1086 (HDLLGVPAAG…GLCCTPSPAQ (136 aa)) is N-terminal hotdog fold. Residues 951-1243 (HDLLGVPAAG…SVRVINNAGT (293 aa)) form a dehydratase (DH) domain region. Residues 951 to 1270 (HDLLGVPAAG…CQSLGSSAVV (320 aa)) enclose the PKS/mFAS DH domain. Histidine 983 functions as the Proton acceptor; for dehydratase activity in the catalytic mechanism. Residues 1108-1270 (AWRILNPADT…CQSLGSSAVV (163 aa)) form a C-terminal hotdog fold region. The Proton donor; for dehydratase activity role is filled by aspartate 1174. A methyltransferase (CMet) domain region spans residues 1406 to 1587 (EDQAEWSSVS…RLLAKAGFEP (182 aa)). The enoyl reductase (ER) (ER) domain stretch occupies residues 1823–2137 (GLLNSLVFTE…TGKHMGKIVL (315 aa)). The tract at residues 2162–2339 (TYLLVGGVGG…AVSIDLGMVS (178 aa)) is ketoreductase (KR) domain. Positions 2445-2522 (EVTTLIQSAL…GLAGQMAKKS (78 aa)) constitute a Carrier domain. Serine 2482 bears the O-(pantetheine 4'-phosphoryl)serine mark.

Its pathway is secondary metabolite biosynthesis. Functionally, highly reducing polyketide synthase; part of the gene cluster that mediates the biosynthesis of oxaleimides, cytotoxic compounds containing an unusual disubstituted succinimide moiety. The first step of the pathway is provided by the HR-PKS poxF that serves in a new mode of collaborative biosynthesis with the PKS-NRPS poxE, by providing the olefin containing amino acid substrate via the synthesis of an ACP-bound dec-4-enoate. The cytochrome P450 monooxygenase poxM-catalyzed oxidation at the alpha-position creates the enzyme-bound 2-hydroxydec-4-enoyl-ACP thioester, which may be prone to spontaneous hydrolysis to yield 2-hydroxydec-4-enoic acid due to increased electrophilicity of the carbonyl. 2-hydroxydec-4-enoic acid can then be further oxidized by poxM to yield the alpha-ketoacid 2-oxodec-4-enoicacid, which is reductively aminated by the aminotransferase poxL to yield (S,E)-2-aminodec-4-enoic acid. The Hybrid PKS-NRPS synthetase poxE then performs condensation between the octaketide product of its PKS modules and the amino group of (S,E)-2-aminodec-4-enoic acid which is activated and incorporated by the adenylation domain. The resulting aminoacyl product can be cyclized by the Diels-Alderase PoxQ and reductively released by the reductive (R) domain of poxE to yield an aldehyde intermediate. The released aldehyde is then substrate for a Knoevenagel condensation by the hydrolyase poxO followed by an oxidation at the 5-position of the pyrrolidone ring. The presence of the olefin from the amino acid building block allows for migration of the substituted allyl group to occur. This allylic transposition reaction takes place in a conjugate addition, semipinacol-like fashion to yield a succinimide intermediate. Iterative two-electron oxidations of the C7 methyl of the succinimide intermediate to the carboxylic acid can be catalyzed by one of two remaining cytochrome P450 monooxygenasess poxC or poxD to yield oxaleimide A. Subsequent oxidation yields the maleimide scaffold oxaleimide I. Both oxaleimide A and oxaleimide I can undergo oxidative modifications in the decalin ring to yield the series of products oxaleimides B to H. In Penicillium oxalicum, this protein is Highly reducing polyketide synthase poxF.